The chain runs to 643 residues: Cell pattern formation-associated protein asm-1 (643 aa).

Residues 1-37 (MNPNTPADVYYGQMSQGSSMPVTTVPSHSHYASQQPP) form a disordered region. Positions 13 to 33 (QMSQGSSMPVTTVPSHSHYAS) are enriched in polar residues. The HTH APSES-type domain occupies 116–222 (RVTATLWEDE…HNIGALLYHP (107 aa)). A DNA-binding region (H-T-H motif) is located at residues 150 to 171 (GTKLLNVAGMTRGRRDGILKSE). The disordered stretch occupies residues 229–627 (SQVMAAAEQR…GSLPSPTYTA (399 aa)). Polar residues predominate over residues 306–335 (DGYQWSQQSMSGTQGNSSLSLDTSLGSNAR). The span at 336–349 (SMPSTPATTPPGST) shows a compositional bias: low complexity. The span at 350-367 (IQSMQNYPPVSQSYESSR) shows a compositional bias: polar residues. The segment covering 368–391 (QMYQGQSAQQAQYQSQQHYSSQPQ) has biased composition (low complexity). Polar residues-rich tracts occupy residues 471–481 (GSYNYNTQAVN), 529–551 (QPSSSLYNVMSNERTGSNGTQGN), and 563–577 (SLPNGYSAQPSVMNG). The segment at 583 to 612 (KRGRDDDDDGGRPTTSAPNLGPGMDMKRRK) is nuclear localization domain.

This sequence belongs to the EFG1/PHD1/stuA family.

It localises to the nucleus. Functionally, transcription factor that regulates asexual reproduction. Binds the StuA-response elements (StRE) with the consensus sequence 5'-(A/T)CGCG(T/A)N(A/C)-3' at the promoters of target genes. Required for rapid conidial germination, normal vegetative morphology, and protoperithecium formation. This is Cell pattern formation-associated protein asm-1 from Neurospora crassa (strain ATCC 24698 / 74-OR23-1A / CBS 708.71 / DSM 1257 / FGSC 987).